A 362-amino-acid polypeptide reads, in one-letter code: Uracil-DNA glycosylase (362 aa).

The segment at 28–97 (ASVAPNDPTE…AGPTEDPNFA (70 aa)) is disordered. The active-site Proton acceptor is the D205.

Belongs to the uracil-DNA glycosylase (UDG) superfamily. UNG family.

Its subcellular location is the host nucleus. The enzyme catalyses Hydrolyzes single-stranded DNA or mismatched double-stranded DNA and polynucleotides, releasing free uracil.. Excises uracil residues from the DNA which can arise as a result of misincorporation of dUMP residues by DNA polymerase or deamination of cytosines. Therefore may reduce deleterious uracil incorporation into the viral genome, particularly in terminally differentiated cells which lack DNA repair enzymes. In Psittacid herpesvirus 1 (isolate Amazon parrot/-/97-0001/1997) (PsHV-1), this protein is Uracil-DNA glycosylase (UL2).